Reading from the N-terminus, the 560-residue chain is Endogenous retrovirus group K member 18 Env polyprotein (560 aa).

The fusion peptide stretch occupies residues 355–375 (FIFTLIAVIMGLIAVTATAAV). Residues 522 to 542 (IRSTMIINLILIVVCLFCLLL) form a helical membrane-spanning segment.

Belongs to the beta type-B retroviral envelope protein family. HERV class-II K(HML-2) env subfamily. The surface (SU) and transmembrane (TM) proteins form a heterodimer. SU and TM are attached by noncovalent interactions or by a labile interchain disulfide bond. Post-translationally, specific enzymatic cleavages in vivo yield the mature SU and TM proteins. In terms of tissue distribution, expressed at higher level in the thymus. Expressed at lower level in peripheral blood lymphocytes.

The protein resides in the cell membrane. It is found in the virion. In terms of biological role, retroviral envelope proteins mediate receptor recognition and membrane fusion during early infection. Endogenous envelope proteins may have kept, lost or modified their original function during evolution. This envelope protein has superantigenic properties. Functionally, SU mediates receptor recognition. TM anchors the envelope heterodimer to the viral membrane through one transmembrane domain. The other hydrophobic domain, called fusion peptide, mediates fusion of the viral membrane with the target cell membrane. The sequence is that of Endogenous retrovirus group K member 18 Env polyprotein (ERVK-18) from Homo sapiens (Human).